Here is a 931-residue protein sequence, read N- to C-terminus: Protein translocase subunit SecA (931 aa).

ATP-binding positions include Gln87, 105-109 (GEGKT), and Asp515. Zn(2+) contacts are provided by Cys915, Cys917, Cys926, and His927.

This sequence belongs to the SecA family. In terms of assembly, monomer and homodimer. Part of the essential Sec protein translocation apparatus which comprises SecA, SecYEG and auxiliary proteins SecDF-YajC and YidC. Zn(2+) serves as cofactor.

It is found in the cell inner membrane. Its subcellular location is the cytoplasm. It catalyses the reaction ATP + H2O + cellular proteinSide 1 = ADP + phosphate + cellular proteinSide 2.. Its function is as follows. Part of the Sec protein translocase complex. Interacts with the SecYEG preprotein conducting channel. Has a central role in coupling the hydrolysis of ATP to the transfer of proteins into and across the cell membrane, serving both as a receptor for the preprotein-SecB complex and as an ATP-driven molecular motor driving the stepwise translocation of polypeptide chains across the membrane. The polypeptide is Protein translocase subunit SecA (Burkholderia pseudomallei (strain K96243)).